The primary structure comprises 353 residues: Protein RecA (353 aa).

67 to 74 contacts ATP; the sequence is GPESSGKT. The interval 330-353 is disordered; the sequence is SNPNSTPDFSVDDSEGVAETNEDF. Positions 339–353 are enriched in acidic residues; that stretch reads SVDDSEGVAETNEDF.

The protein belongs to the RecA family.

The protein resides in the cytoplasm. Functionally, can catalyze the hydrolysis of ATP in the presence of single-stranded DNA, the ATP-dependent uptake of single-stranded DNA by duplex DNA, and the ATP-dependent hybridization of homologous single-stranded DNAs. It interacts with LexA causing its activation and leading to its autocatalytic cleavage. This Shigella sonnei protein is Protein RecA.